A 297-amino-acid chain; its full sequence is N-acetylneuraminate lyase (297 aa).

Residues Ser-47 and Thr-48 each coordinate aceneuramate. Residue Tyr-137 is the Proton donor of the active site. Residue Lys-165 is the Schiff-base intermediate with substrate of the active site. Aceneuramate-binding residues include Thr-167, Gly-189, Asp-191, Glu-192, and Ser-208.

Belongs to the DapA family. NanA subfamily. In terms of assembly, homotetramer.

The protein resides in the cytoplasm. The catalysed reaction is aceneuramate = aldehydo-N-acetyl-D-mannosamine + pyruvate. The protein operates within amino-sugar metabolism; N-acetylneuraminate degradation; D-fructose 6-phosphate from N-acetylneuraminate: step 1/5. Its function is as follows. Catalyzes the reversible aldol cleavage of N-acetylneuraminic acid (sialic acid; Neu5Ac) to form pyruvate and N-acetylmannosamine (ManNAc) via a Schiff base intermediate. This Shigella boydii serotype 4 (strain Sb227) protein is N-acetylneuraminate lyase.